We begin with the raw amino-acid sequence, 247 residues long: 1-(5-phosphoribosyl)-5-[(5-phosphoribosylamino)methylideneamino] imidazole-4-carboxamide isomerase (247 aa).

Residue Asp8 is the Proton acceptor of the active site. The active-site Proton donor is the Asp130.

It belongs to the HisA/HisF family.

Its subcellular location is the cytoplasm. The enzyme catalyses 1-(5-phospho-beta-D-ribosyl)-5-[(5-phospho-beta-D-ribosylamino)methylideneamino]imidazole-4-carboxamide = 5-[(5-phospho-1-deoxy-D-ribulos-1-ylimino)methylamino]-1-(5-phospho-beta-D-ribosyl)imidazole-4-carboxamide. Its pathway is amino-acid biosynthesis; L-histidine biosynthesis; L-histidine from 5-phospho-alpha-D-ribose 1-diphosphate: step 4/9. This chain is 1-(5-phosphoribosyl)-5-[(5-phosphoribosylamino)methylideneamino] imidazole-4-carboxamide isomerase, found in Leptospira biflexa serovar Patoc (strain Patoc 1 / Ames).